The chain runs to 343 residues: Phenylalanine--tRNA ligase alpha subunit (343 aa).

Glu-256 contributes to the Mg(2+) binding site.

The protein belongs to the class-II aminoacyl-tRNA synthetase family. Phe-tRNA synthetase alpha subunit type 1 subfamily. Tetramer of two alpha and two beta subunits. Mg(2+) is required as a cofactor.

The protein resides in the cytoplasm. It catalyses the reaction tRNA(Phe) + L-phenylalanine + ATP = L-phenylalanyl-tRNA(Phe) + AMP + diphosphate + H(+). The sequence is that of Phenylalanine--tRNA ligase alpha subunit from Aster yellows witches'-broom phytoplasma (strain AYWB).